Here is a 401-residue protein sequence, read N- to C-terminus: MARPDLHERISSLRKLRVAQERVRVRRQVGRRDGVRLEIDGRWLTGFCSNDYLGLSQQFEVVAALQDAAARDGAGATASHLICGHHTAHETLEREIAEWLGYPSALLFGSGFIANLAVQQALLSEEDDVCVQDRLNHASLLDATRLAGCRLRRYPHLDVEGAMRQLKGAPEGAAMLATDGVFSMDGDVAPLRALSLVARMQQALFYVDDAHGVGVLGPQGRGCVADAGLGVAEVPLQLVTLGKALGGYGAVVVGEEALVRHLAETARPYIYTTALPPAQVAATLAAVRLARRDDWRRARLVELIGAFRDGARKHGFELMASDTPIQPLLCGEEATVMAMSAALEHAGFMVGAIRPPTVPEGKARLRVTLSALHTQQQVQALIEAIVQARDVVSRQPLRASA.

Arginine 24 is a binding site for substrate. 111–112 lines the pyridoxal 5'-phosphate pocket; that stretch reads GF. Position 137 (histidine 137) interacts with substrate. Residues serine 183, histidine 211, and threonine 240 each coordinate pyridoxal 5'-phosphate. Lysine 243 carries the post-translational modification N6-(pyridoxal phosphate)lysine. Threonine 357 contributes to the substrate binding site.

It belongs to the class-II pyridoxal-phosphate-dependent aminotransferase family. BioF subfamily. In terms of assembly, homodimer. Requires pyridoxal 5'-phosphate as cofactor.

It carries out the reaction 6-carboxyhexanoyl-[ACP] + L-alanine + H(+) = (8S)-8-amino-7-oxononanoate + holo-[ACP] + CO2. It functions in the pathway cofactor biosynthesis; biotin biosynthesis. In terms of biological role, catalyzes the decarboxylative condensation of pimeloyl-[acyl-carrier protein] and L-alanine to produce 8-amino-7-oxononanoate (AON), [acyl-carrier protein], and carbon dioxide. The protein is 8-amino-7-oxononanoate synthase of Xanthomonas axonopodis pv. citri (strain 306).